A 341-amino-acid polypeptide reads, in one-letter code: MKMQDKLNQIKELALVEIKEAKDSTTIDTIRVKYLGKKGELTTILRGMGSLSKEERPIVGKLANEVREVLEAELEAITKAVKEAEKQEKLKNEVIDISMPGKKQTIGKKHPLEQTLDEMKKIFVSMGFAIEDGPEVEKDYYNFEALNIPKNHPARSEQDTFYINDNVVLRTQTSPVQARVMEKQQPPIKMISPGKVFRSDAVDATHSPIFYQMEGLVIDKDITFADLKGTLELFAKKMFGDKVKTKFRPHHFPFTEPSAEMDATCFVCNGKGCKVCKGEGWIEILGCGMVHPQVLRNCGIDPEVYSGFAFGFGVDRMVMLKYGIDDIRLLYESDMRFLNQF.

Position 256 (E256) interacts with Mg(2+).

This sequence belongs to the class-II aminoacyl-tRNA synthetase family. Phe-tRNA synthetase alpha subunit type 1 subfamily. As to quaternary structure, tetramer of two alpha and two beta subunits. Requires Mg(2+) as cofactor.

It is found in the cytoplasm. The catalysed reaction is tRNA(Phe) + L-phenylalanine + ATP = L-phenylalanyl-tRNA(Phe) + AMP + diphosphate + H(+). The polypeptide is Phenylalanine--tRNA ligase alpha subunit (Clostridium perfringens (strain 13 / Type A)).